Here is a 586-residue protein sequence, read N- to C-terminus: DNA-binding protein RFX8 (586 aa).

The segment at residues 22 to 97 (VIQWLVDNFC…YHYDGICIKK (76 aa)) is a DNA-binding region (RFX-type winged-helix).

The protein belongs to the RFX family.

It is found in the nucleus. May be a transcription factor. The polypeptide is DNA-binding protein RFX8 (RFX8) (Homo sapiens (Human)).